Reading from the N-terminus, the 357-residue chain is Norreticuline-7-O-methyltransferase (357 aa).

Asp225 is a binding site for S-adenosyl-L-methionine. His263 acts as the Proton acceptor in catalysis.

Belongs to the class I-like SAM-binding methyltransferase superfamily. Cation-independent O-methyltransferase family. Expressed instems, leaves, roots and seedlings.

Involved in the biosynthesis of benzylisoquinoline alkaloids. Catalyzes specifically the methylation of norreticuline at position seven to produce norlaudanine. No activity with norcoclaurine, reticuline, norlaudanosoline, norisoorientaline, scoulerine, salutaridinol, oripavine, salsolinol, codeine or morphine. Involved in papaverine biosynthesis. The sequence is that of Norreticuline-7-O-methyltransferase from Papaver somniferum (Opium poppy).